Here is an 82-residue protein sequence, read N- to C-terminus: uncharacterized protein (82 aa).

Transmembrane regions (helical) follow at residues 8-28 and 50-70; these read LLSA…LPAP and LYTV…YLVL.

It is found in the cell membrane. This is an uncharacterized protein from Klebsiella pneumoniae.